The following is a 360-amino-acid chain: GTPase Obg (360 aa).

An Obg domain is found at 1 to 156 (MFVDSVEIII…KCVRLELKLI (156 aa)). One can recognise an OBG-type G domain in the interval 157-360 (ADIGLVGFPN…LKFVLLKALQ (204 aa)). GTP is bound by residues 163 to 170 (GFPNAGKS), 188 to 192 (FTTLV), 210 to 213 (DIPG), 279 to 282 (NKCD), and 341 to 343 (SAV). Mg(2+)-binding residues include serine 170 and threonine 190.

It belongs to the TRAFAC class OBG-HflX-like GTPase superfamily. OBG GTPase family. As to quaternary structure, monomer. Mg(2+) serves as cofactor.

It localises to the cytoplasm. In terms of biological role, an essential GTPase which binds GTP, GDP and possibly (p)ppGpp with moderate affinity, with high nucleotide exchange rates and a fairly low GTP hydrolysis rate. Plays a role in control of the cell cycle, stress response, ribosome biogenesis and in those bacteria that undergo differentiation, in morphogenesis control. The protein is GTPase Obg of Helicobacter pylori (strain J99 / ATCC 700824) (Campylobacter pylori J99).